We begin with the raw amino-acid sequence, 354 residues long: Allantoicase (354 aa).

It belongs to the allantoicase family.

The enzyme catalyses allantoate + H2O = (S)-ureidoglycolate + urea. The protein operates within nitrogen metabolism; (S)-allantoin degradation; (S)-ureidoglycolate from allantoate (aminidohydrolase route): step 1/1. Utilization of purines as secondary nitrogen sources, when primary sources are limiting. This chain is Allantoicase (alc-1), found in Neurospora crassa (strain ATCC 24698 / 74-OR23-1A / CBS 708.71 / DSM 1257 / FGSC 987).